Consider the following 306-residue polypeptide: Non-specific ribonucleoside hydrolase RihC (306 aa).

The active site involves H235.

It belongs to the IUNH family. RihC subfamily.

Hydrolyzes both purine and pyrimidine ribonucleosides with a broad-substrate specificity. The chain is Non-specific ribonucleoside hydrolase RihC from Salmonella typhi.